Consider the following 283-residue polypeptide: Nucleoid occlusion protein (283 aa).

A DNA-binding region (H-T-H motif) is located at residues 142–161; the sequence is ESLAQRLGKGQSTIANKLRL.

This sequence belongs to the ParB family.

Its subcellular location is the cytoplasm. The protein resides in the nucleoid. In terms of biological role, effects nucleoid occlusion by binding relatively nonspecifically to DNA and preventing the assembly of the division machinery in the vicinity of the nucleoid, especially under conditions that disturb the cell cycle. It helps to coordinate cell division and chromosome segregation by preventing the formation of the Z ring through the nucleoid, which would cause chromosome breakage. In Shouchella clausii (strain KSM-K16) (Alkalihalobacillus clausii), this protein is Nucleoid occlusion protein.